Consider the following 294-residue polypeptide: Diaminopimelate epimerase (294 aa).

Asparagine 11 and asparagine 78 together coordinate substrate. Cysteine 87 (proton donor) is an active-site residue. Substrate contacts are provided by residues 88–89 (GN), asparagine 167, asparagine 203, and 221–222 (ER). Cysteine 230 acts as the Proton acceptor in catalysis. 231–232 (GT) serves as a coordination point for substrate.

This sequence belongs to the diaminopimelate epimerase family. As to quaternary structure, homodimer.

Its subcellular location is the cytoplasm. The catalysed reaction is (2S,6S)-2,6-diaminopimelate = meso-2,6-diaminopimelate. It participates in amino-acid biosynthesis; L-lysine biosynthesis via DAP pathway; DL-2,6-diaminopimelate from LL-2,6-diaminopimelate: step 1/1. In terms of biological role, catalyzes the stereoinversion of LL-2,6-diaminopimelate (L,L-DAP) to meso-diaminopimelate (meso-DAP), a precursor of L-lysine and an essential component of the bacterial peptidoglycan. The sequence is that of Diaminopimelate epimerase from Mycolicibacterium paratuberculosis (strain ATCC BAA-968 / K-10) (Mycobacterium paratuberculosis).